Reading from the N-terminus, the 230-residue chain is Flagellar L-ring protein (230 aa).

Residues 1 to 21 (MMLKTVLRLPVCAALLALAAG) form the signal peptide. Cysteine 22 carries N-palmitoyl cysteine lipidation. Cysteine 22 carries the S-diacylglycerol cysteine lipid modification. The interval 34 to 53 (PLTAPPPPPPQPSARPNGSI) is disordered. Residues 36–46 (TAPPPPPPQPS) show a composition bias toward pro residues.

This sequence belongs to the FlgH family. The basal body constitutes a major portion of the flagellar organelle and consists of four rings (L,P,S, and M) mounted on a central rod.

It localises to the cell outer membrane. The protein localises to the bacterial flagellum basal body. Functionally, assembles around the rod to form the L-ring and probably protects the motor/basal body from shearing forces during rotation. The sequence is that of Flagellar L-ring protein from Bordetella bronchiseptica (strain ATCC BAA-588 / NCTC 13252 / RB50) (Alcaligenes bronchisepticus).